A 299-amino-acid chain; its full sequence is Protein-methionine-sulfoxide reductase catalytic subunit MsrP (299 aa).

A signal peptide (tat-type signal) is located at residues 1 to 44 (MAHRWINDLTPADITPRGAWMNRRQVMAGMAGAGLAAFAGSAQA). Mo-molybdopterin-binding positions include N59, 62–63 (YE), C117, T152, N200, R205, and 216–218 (SIK).

Belongs to the MsrP family. As to quaternary structure, heterodimer of a catalytic subunit (MsrP) and a heme-binding subunit (MsrQ). The cofactor is Mo-molybdopterin. In terms of processing, predicted to be exported by the Tat system. The position of the signal peptide cleavage has not been experimentally proven.

Its subcellular location is the periplasm. It carries out the reaction L-methionyl-[protein] + a quinone + H2O = L-methionyl-(S)-S-oxide-[protein] + a quinol. The catalysed reaction is L-methionyl-[protein] + a quinone + H2O = L-methionyl-(R)-S-oxide-[protein] + a quinol. Its function is as follows. Part of the MsrPQ system that repairs oxidized periplasmic proteins containing methionine sulfoxide residues (Met-O), using respiratory chain electrons. Thus protects these proteins from oxidative-stress damage caused by reactive species of oxygen and chlorine generated by the host defense mechanisms. MsrPQ is essential for the maintenance of envelope integrity under bleach stress, rescuing a wide series of structurally unrelated periplasmic proteins from methionine oxidation. The catalytic subunit MsrP is non-stereospecific, being able to reduce both (R-) and (S-) diastereoisomers of methionine sulfoxide. The sequence is that of Protein-methionine-sulfoxide reductase catalytic subunit MsrP from Ruegeria pomeroyi (strain ATCC 700808 / DSM 15171 / DSS-3) (Silicibacter pomeroyi).